Consider the following 471-residue polypeptide: ATP synthase subunit beta (471 aa).

156–163 (GGAGVGKT) serves as a coordination point for ATP.

The protein belongs to the ATPase alpha/beta chains family. As to quaternary structure, F-type ATPases have 2 components, CF(1) - the catalytic core - and CF(0) - the membrane proton channel. CF(1) has five subunits: alpha(3), beta(3), gamma(1), delta(1), epsilon(1). CF(0) has three main subunits: a(1), b(2) and c(9-12). The alpha and beta chains form an alternating ring which encloses part of the gamma chain. CF(1) is attached to CF(0) by a central stalk formed by the gamma and epsilon chains, while a peripheral stalk is formed by the delta and b chains.

The protein resides in the cell membrane. The enzyme catalyses ATP + H2O + 4 H(+)(in) = ADP + phosphate + 5 H(+)(out). Produces ATP from ADP in the presence of a proton gradient across the membrane. The catalytic sites are hosted primarily by the beta subunits. The sequence is that of ATP synthase subunit beta from Staphylococcus carnosus (strain TM300).